The following is a 145-amino-acid chain: Putative antiporter subunit mnhG2 (145 aa).

The next 3 membrane-spanning stretches (helical) occupy residues 11-31, 51-71, and 72-92; these read IAAV…IGIV, VLLT…FFSV, and RLLL…HLVA.

It belongs to the CPA3 antiporters (TC 2.A.63) subunit G family. May form a heterooligomeric complex that consists of seven subunits: mnhA2, mnhB2, mnhC2, mnhD2, mnhE2, mnhF2 and mnhG2.

The protein resides in the cell membrane. The protein is Putative antiporter subunit mnhG2 (mnhG2) of Staphylococcus aureus (strain bovine RF122 / ET3-1).